A 100-amino-acid polypeptide reads, in one-letter code: Apolipoprotein C-II (100 aa).

The signal sequence occupies residues 1–25 (MDARSLLLLWLLLPLLLLLGCEVQG). The lipid binding stretch occupies residues 65 to 73 (AVDETIRDI). Positions 77–100 (GSAAISTYTGILTDQILTMLQGKQ) are lipoprotein lipase cofactor.

This sequence belongs to the apolipoprotein C2 family. In terms of processing, proapolipoprotein C-II is synthesized as a sialic acid containing glycoprotein which is subsequently desialylated prior to its proteolytic processing. Post-translationally, proapolipoprotein C-II, the major form found in plasma undergoes proteolytic cleavage of its N-terminal hexapeptide to generate apolipoprotein C-II, which occurs as the minor form in plasma. Liver.

Its subcellular location is the secreted. Functionally, component of chylomicrons, very low-density lipoproteins (VLDL), low-density lipoproteins (LDL), and high-density lipoproteins (HDL) in plasma. Plays an important role in lipoprotein metabolism as an activator of lipoprotein lipase. Both proapolipoprotein C-II and apolipoprotein C-II can activate lipoprotein lipase. In Cavia porcellus (Guinea pig), this protein is Apolipoprotein C-II (APOC2).